Consider the following 257-residue polypeptide: UPF0246 protein ECA3888 (257 aa).

This sequence belongs to the UPF0246 family.

The protein is UPF0246 protein ECA3888 of Pectobacterium atrosepticum (strain SCRI 1043 / ATCC BAA-672) (Erwinia carotovora subsp. atroseptica).